The primary structure comprises 425 residues: Serine--tRNA ligase (425 aa).

230 to 232 (TGE) contacts L-serine. Residue 261–263 (RKE) participates in ATP binding. L-serine is bound at residue Glu-284. 348–351 (EISS) contacts ATP. Ser-385 lines the L-serine pocket.

The protein belongs to the class-II aminoacyl-tRNA synthetase family. Type-1 seryl-tRNA synthetase subfamily. Homodimer. The tRNA molecule binds across the dimer.

Its subcellular location is the cytoplasm. It catalyses the reaction tRNA(Ser) + L-serine + ATP = L-seryl-tRNA(Ser) + AMP + diphosphate + H(+). The enzyme catalyses tRNA(Sec) + L-serine + ATP = L-seryl-tRNA(Sec) + AMP + diphosphate + H(+). It functions in the pathway aminoacyl-tRNA biosynthesis; selenocysteinyl-tRNA(Sec) biosynthesis; L-seryl-tRNA(Sec) from L-serine and tRNA(Sec): step 1/1. In terms of biological role, catalyzes the attachment of serine to tRNA(Ser). Is also able to aminoacylate tRNA(Sec) with serine, to form the misacylated tRNA L-seryl-tRNA(Sec), which will be further converted into selenocysteinyl-tRNA(Sec). This Wolbachia sp. subsp. Brugia malayi (strain TRS) protein is Serine--tRNA ligase.